Reading from the N-terminus, the 240-residue chain is Tetrahydromethanopterin S-methyltransferase subunit A (240 aa).

The Cytoplasmic portion of the chain corresponds to 1–218 (MVDKKEPASG…KFHSGVHAGK (218 aa)). Histidine 85 is a binding site for 5-hydroxybenzimidazolylcob(I)amide. A helical transmembrane segment spans residues 219 to 239 (IEGAMIGLTVTISLLGLLLLG). Residue arginine 240 is a topological domain, extracellular.

Belongs to the MtrA family. In terms of assembly, the complex is composed of 8 subunits; MtrA, MtrB, MtrC, MtrD, MtrE, MtrF, MtrG and MtrH. It depends on 5-hydroxybenzimidazolylcob(I)amide as a cofactor.

The protein localises to the cell membrane. The enzyme catalyses 5-methyl-5,6,7,8-tetrahydromethanopterin + coenzyme M + 2 Na(+)(in) = 5,6,7,8-tetrahydromethanopterin + methyl-coenzyme M + 2 Na(+)(out). Its pathway is one-carbon metabolism; methanogenesis from CO(2); methyl-coenzyme M from 5,10-methylene-5,6,7,8-tetrahydromethanopterin: step 2/2. Functionally, part of a complex that catalyzes the formation of methyl-coenzyme M and tetrahydromethanopterin from coenzyme M and methyl-tetrahydromethanopterin. This is an energy-conserving, sodium-ion translocating step. The protein is Tetrahydromethanopterin S-methyltransferase subunit A of Methanosarcina acetivorans (strain ATCC 35395 / DSM 2834 / JCM 12185 / C2A).